The primary structure comprises 386 residues: Phosphoglycerate kinase (386 aa).

Substrate is bound by residues 21 to 23, Arg36, 59 to 62, Arg113, and Arg146; these read DLN and HLGR. Residues Lys197, Glu314, and 340–343 contribute to the ATP site; that span reads GGDT.

Belongs to the phosphoglycerate kinase family. As to quaternary structure, monomer.

The protein resides in the cytoplasm. The catalysed reaction is (2R)-3-phosphoglycerate + ATP = (2R)-3-phospho-glyceroyl phosphate + ADP. It functions in the pathway carbohydrate degradation; glycolysis; pyruvate from D-glyceraldehyde 3-phosphate: step 2/5. The sequence is that of Phosphoglycerate kinase from Ectopseudomonas mendocina (strain ymp) (Pseudomonas mendocina).